Reading from the N-terminus, the 1891-residue chain is Endoribonuclease Dicer-L (1891 aa).

A Helicase ATP-binding domain is found at 41-217; the sequence is LLEAALDHNT…DLEEKIQKLE (177 aa). 54–61 is a binding site for ATP; it reads LNSGSGKT. A DECH box motif is present at residues 165-168; sequence DECH. Positions 425–594 constitute a Helicase C-terminal domain; that stretch reads SFPSPFTNIL…SIDCGNTESE (170 aa). The 93-residue stretch at 622–714 folds into the Dicer dsRNA-binding fold domain; the sequence is AIGHINRYCA…MPVGKETVKY (93 aa). Residues 887 to 1034 enclose the PAZ domain; that stretch reads KFVEDIEKSE…LVPELCAIHP (148 aa). 2 consecutive RNase III domains span residues 1248–1379 and 1635–1793; these read TSDM…ETSG and FENF…MDSG. Residues Glu-1292, Asp-1370, Glu-1373, Glu-1674, Asp-1779, and Glu-1782 each coordinate Mg(2+). One can recognise a DRBM domain in the interval 1818 to 1883; the sequence is VPRSPVRELL…ARRALRSLKA (66 aa).

It belongs to the helicase family. Dicer subfamily. Component of the RISC loading complex (RLC), or micro-RNA (miRNA) loading complex (miRLC), which is composed of dicer1, ago2 and tarbp2; dicer1 and tarbp2 are required to process precursor miRNAs (pre-miRNAs) to mature miRNAs and then load them onto ago2. Note that the trimeric RLC/miRLC is also referred to as RISC. It depends on Mg(2+) as a cofactor. The cofactor is Mn(2+).

The protein resides in the cytoplasm. It catalyses the reaction Endonucleolytic cleavage to 5'-phosphomonoester.. Its function is as follows. Double-stranded RNA (dsRNA) endoribonuclease playing a central role in short dsRNA-mediated post-transcriptional gene silencing. Cleaves naturally occurring long dsRNAs and short hairpin pre-microRNAs (miRNA) into fragments of 21 to 23 nucleotides with 3' overhang of two nucleotides, producing respectively short interfering RNAs (siRNA) and mature microRNAs. SiRNAs and miRNAs serve as guide to direct the RNA-induced silencing complex (RISC) to complementary RNAs to degrade them or prevent their translation. Gene silencing mediated by siRNAs, also called RNA interference, controls the elimination of transcripts from mobile and repetitive DNA elements of the genome but also the degradation of exogenous RNA of viral origin for instance. The miRNA pathway on the other side is a mean to specifically regulate the expression of target genes. During embryonic development, at the left-right organizer, post-transcriptionally regulates the expression of dand5 in flow sensor cells. In post-flow stages, acts along with Bicc1 to repress dand5 mRNA translation and decay. Decreased Dand5 expression lifts repression of Nodal and defines leftness by induction of the lateral plate mesoderm Nodal signaling cascade. The polypeptide is Endoribonuclease Dicer-L (dicer1.L) (Xenopus laevis (African clawed frog)).